The sequence spans 140 residues: ATP synthase epsilon chain (140 aa).

Belongs to the ATPase epsilon chain family. In terms of assembly, F-type ATPases have 2 components, CF(1) - the catalytic core - and CF(0) - the membrane proton channel. CF(1) has five subunits: alpha(3), beta(3), gamma(1), delta(1), epsilon(1). CF(0) has three main subunits: a, b and c.

Its subcellular location is the cell inner membrane. In terms of biological role, produces ATP from ADP in the presence of a proton gradient across the membrane. This is ATP synthase epsilon chain from Xanthomonas axonopodis pv. citri (strain 306).